A 225-amino-acid chain; its full sequence is Fibroblast growth factor 11 (225 aa).

The disordered stretch occupies residues 1–28 (MAALASSLIRQKREVREPGGSRPVSAQR).

This sequence belongs to the heparin-binding growth factors family. In terms of tissue distribution, brain and eye, and in a segmental pattern of the embryonic body wall. In adult olfactory bulb, hippocampus and most concentrated in Purkinje cell layer of the cerebellum.

It is found in the nucleus. In terms of biological role, probably involved in nervous system development and function. This is Fibroblast growth factor 11 (Fgf11) from Mus musculus (Mouse).